The following is a 74-amino-acid chain: MGSFSIWHWLIVLLIVVLVFGTKKLRNLGSDLGGAVKGFREGVKSADEEEISAHNHTEARIIDADIKDKAQSKS.

The chain crosses the membrane as a helical span at residues 1 to 21 (MGSFSIWHWLIVLLIVVLVFG).

It belongs to the TatA/E family. As to quaternary structure, the Tat system comprises two distinct complexes: a TatABC complex, containing multiple copies of TatA, TatB and TatC subunits, and a separate TatA complex, containing only TatA subunits. Substrates initially bind to the TatABC complex, which probably triggers association of the separate TatA complex to form the active translocon.

It localises to the cell inner membrane. Its function is as follows. Part of the twin-arginine translocation (Tat) system that transports large folded proteins containing a characteristic twin-arginine motif in their signal peptide across membranes. TatA could form the protein-conducting channel of the Tat system. The sequence is that of Sec-independent protein translocase protein TatA from Nitrosospira multiformis (strain ATCC 25196 / NCIMB 11849 / C 71).